The following is a 209-amino-acid chain: Uracil phosphoribosyltransferase (209 aa).

5-phospho-alpha-D-ribose 1-diphosphate-binding positions include arginine 79, arginine 104, and 131-139 (DPMLATGVS). Uracil contacts are provided by residues isoleucine 194 and 199 to 201 (GDA). Residue aspartate 200 coordinates 5-phospho-alpha-D-ribose 1-diphosphate.

Belongs to the UPRTase family. Mg(2+) is required as a cofactor.

The enzyme catalyses UMP + diphosphate = 5-phospho-alpha-D-ribose 1-diphosphate + uracil. The protein operates within pyrimidine metabolism; UMP biosynthesis via salvage pathway; UMP from uracil: step 1/1. Allosterically activated by GTP. Its function is as follows. Catalyzes the conversion of uracil and 5-phospho-alpha-D-ribose 1-diphosphate (PRPP) to UMP and diphosphate. This chain is Uracil phosphoribosyltransferase, found in Thermotoga neapolitana (strain ATCC 49049 / DSM 4359 / NBRC 107923 / NS-E).